The primary structure comprises 369 residues: Dual specificity protein phosphatase 1-A (369 aa).

Positions 21–138 (RAHKCLILDC…FSAQCPEFCT (118 aa)) constitute a Rhodanese domain. Thr-168 carries the phosphothreonine; by MAPK1 modification. The region spanning 175–316 (GPVEILPFLY…LLQFESQVLA (142 aa)) is the Tyrosine-protein phosphatase domain. Cys-260 functions as the Phosphocysteine intermediate in the catalytic mechanism.

The protein belongs to the protein-tyrosine phosphatase family. Non-receptor class dual specificity subfamily. Post-translationally, phosphorylated by MAPK1/ERK2 at Thr-168 and at one or more serine residues in a progesterone-dependent manner. Phosphorylation reduces its rate of degradation but does not seem to affect phosphatase activity. In terms of tissue distribution, expressed in XIK-2 kidney cells.

It is found in the nucleus. The catalysed reaction is O-phospho-L-seryl-[protein] + H2O = L-seryl-[protein] + phosphate. The enzyme catalyses O-phospho-L-threonyl-[protein] + H2O = L-threonyl-[protein] + phosphate. It catalyses the reaction O-phospho-L-tyrosyl-[protein] + H2O = L-tyrosyl-[protein] + phosphate. Its function is as follows. Dual specificity phosphatase that dephosphorylates MAP kinase MAPK1/ERK2 on both 'Thr-188' and 'Tyr-190', regulating its activity during the meiotic cell cycle. This chain is Dual specificity protein phosphatase 1-A, found in Xenopus laevis (African clawed frog).